A 426-amino-acid chain; its full sequence is Glutamyl-tRNA reductase (426 aa).

Substrate is bound by residues 49 to 52 (TCNR), S101, 106 to 108 (EPQ), and Q112. The active-site Nucleophile is C50. Residue 181–186 (GAGETI) participates in NADP(+) binding. Positions 405 to 426 (RLFPEKPGYQHPPHSYPDREDR) are disordered.

This sequence belongs to the glutamyl-tRNA reductase family. Homodimer.

It catalyses the reaction (S)-4-amino-5-oxopentanoate + tRNA(Glu) + NADP(+) = L-glutamyl-tRNA(Glu) + NADPH + H(+). It participates in porphyrin-containing compound metabolism; protoporphyrin-IX biosynthesis; 5-aminolevulinate from L-glutamyl-tRNA(Glu): step 1/2. In terms of biological role, catalyzes the NADPH-dependent reduction of glutamyl-tRNA(Glu) to glutamate 1-semialdehyde (GSA). The polypeptide is Glutamyl-tRNA reductase (Xanthomonas axonopodis pv. citri (strain 306)).